Reading from the N-terminus, the 35-residue chain is Basic endochitinase CH1 (35 aa).

It belongs to the glycosyl hydrolase 19 family. Chitinase class I subfamily.

It carries out the reaction Random endo-hydrolysis of N-acetyl-beta-D-glucosaminide (1-&gt;4)-beta-linkages in chitin and chitodextrins.. In terms of biological role, defense against chitin-containing fungal pathogens. In Castanea sativa (Sweet chestnut), this protein is Basic endochitinase CH1.